Here is a 1410-residue protein sequence, read N- to C-terminus: Non-secreted LysM effector LysM15 (1410 aa).

LysM domains are found at residues T1179–M1225 and T1231–G1277. Over residues T1291–G1303 the composition is skewed to low complexity. Residues T1291–T1317 are disordered. Residues R1328–V1375 form the LysM 3 domain.

Belongs to the secreted LysM effector family.

Its function is as follows. Non-secreted LysM effector that might be involved in manipulation of host defenses for successful infection. This chain is Non-secreted LysM effector LysM15, found in Penicillium expansum (Blue mold rot fungus).